An 804-amino-acid polypeptide reads, in one-letter code: Endoplasmin (804 aa).

The signal sequence occupies residues 1-21 (MRALWVLGLCCVLLTFGSVRA). The SRT pseudosubstrate motif motif lies at 42 to 44 (SRT). N-linked (GlcNAc...) asparagine glycosylation is present at Asn62. Ser64 is modified (phosphoserine). N-linked (GlcNAc...) asparagine glycosylation is present at Asn107. ATP contacts are provided by Asn107, Asp149, and Asn162. At Lys168 the chain carries N6-(2-hydroxyisobutyryl)lysine. Ser172 bears the Phosphoserine mark. Residue Phe199 participates in ATP binding. N-linked (GlcNAc...) asparagine glycosylation is present at Asn217. Residues 288–323 (TVEEPMEEEEAAKEEKEESDDEAAVEEEEEEKKPKT) form a disordered region. Over residues 289–317 (VEEPMEEEEAAKEEKEESDDEAAVEEEEE) the composition is skewed to acidic residues. Ser306 and Ser403 each carry phosphoserine. N6-succinyllysine is present on Lys404. Asn445 carries N-linked (GlcNAc...) asparagine glycosylation. At Ser447 the chain carries Phosphoserine. Lys479 bears the N6-acetyllysine mark. N-linked (GlcNAc...) asparagine glycosylation is found at Asn481 and Asn502. Position 633 is an N6-succinyllysine (Lys633). The disordered stretch occupies residues 750–804 (DPDAKVEEEPEEEPEETTEDTTEDTEQDEDEEMDVGTDEEEQETAKESTAEKDEL). A compositionally biased stretch (acidic residues) spans 757 to 791 (EEPEEEPEETTEDTTEDTEQDEDEEMDVGTDEEEQ). Thr786 is modified (phosphothreonine). Over residues 792–804 (ETAKESTAEKDEL) the composition is skewed to basic and acidic residues. The Prevents secretion from ER signature appears at 801–804 (KDEL).

The protein belongs to the heat shock protein 90 family. As to quaternary structure, homodimer; disulfide-linked. Component of an EIF2 complex at least composed of CELF1/CUGBP1, CALR, CALR3, EIF2S1, EIF2S2, HSP90B1 and HSPA5. Part of a large chaperone multiprotein complex comprising DNAJB11, HSP90B1, HSPA5, HYOU, PDIA2, PDIA4, PDIA6, PPIB, SDF2L1, UGGT1 and very small amounts of ERP29, but not, or at very low levels, CALR nor CANX. Interacts with AIMP1; regulates its retention in the endoplasmic reticulum. Hyperglycosylated form interacts with OS9; promoting its degradation by the endoplasmic reticulum associated degradation (ERAD). Interacts with CNPY3. This interaction is disrupted in the presence of ATP. Interacts with TLR4 and TLR9, but not with TLR3. Interacts with MZB1 in a calcium-dependent manner. Interacts with METTL23. Interacts with IL1B; the interaction facilitates cargo translocation into the ERGIC. Interacts with EIF2AK3. Post-translationally, phosphorylated by CK2. In terms of processing, N-glycosylated cotranslationally at Asn-217 by STT3A-containing OST-A complex: this glycosylation is constitutive. In response to various stress, 5 additional facultative sites (Asn-62, Asn-107, Asn-445, Asn-481 and Asn-502) can be glycosylated post-translationally by STT3B-containing OST-B complex, leading to a hyperglycosylated form that is degraded by the ER-associated degradation (ERAD) pathway. In normal conditions, the OST-A complex together with CCDC134 prevent glycosylation at facultative sites during protein folding, thereby preventing hyperglycosylation. Mechanistically, nascent HSP90B1 is tethered during translation to a specialized CCDC134-containing translocon that forms a microenvironment for its folding, in which STT3A associates with the SRT pseudosubstrate motif, and prevents access to facultative glycosylation sites until folding is completed, rendering its facultative sites inaccessible to the OST-B complex.

The protein localises to the endoplasmic reticulum lumen. It is found in the sarcoplasmic reticulum lumen. The protein resides in the melanosome. It catalyses the reaction ATP + H2O = ADP + phosphate + H(+). Functionally, ATP-dependent chaperone involved in the processing of proteins in the endoplasmic reticulum, regulating their transport. Together with MESD, acts as a modulator of the Wnt pathway by promoting the folding of LRP6, a coreceptor of the canonical Wnt pathway. When associated with CNPY3, required for proper folding of Toll-like receptors. Promotes folding and trafficking of TLR4 to the cell surface. May participate in the unfolding of cytosolic leaderless cargos (lacking the secretion signal sequence) such as the interleukin 1/IL-1 to facilitate their translocation into the ERGIC (endoplasmic reticulum-Golgi intermediate compartment) and secretion; the translocation process is mediated by the cargo receptor TMED10. In Pongo abelii (Sumatran orangutan), this protein is Endoplasmin (HSP90B1).